The following is a 509-amino-acid chain: MATTMMTSSASPPESGELDVASAVASAAAALISPMVMPTSMTNGKDMTKTSQILNEYFNMMVGKRVQLMGDTTSPFSLDTPNPKLMFTPLDLPTTAELMQRCLAVNPFEAKFREANQKISSGSMQPNTSGANQSLEALEANGGSQFSGSNAGTMSDLLLKIPQASLQHSPGIFSNMLLNAGDSEGTTRENLKTADISKLLSVAGDFSAQAPRTADVLNAVLDMHSDRLHTINYLNNKPDFSALLRSPSSSAPNSASVLTNAMAIPSTSGAPFPGTTLLVPPKTVSSYHSPLGASSQPPSTQKSPADGSWDHINGEKQIKKEIPYFNDDAMMLMERSNMSSSGSDQDQSADMSNAGSTASTSTGNPVGRPQNGTPGRGRGRGRSTTADMQPDERRNTILERNKAAAVRYRKRKKEEHDDMMGRVQAMEAEKNQLLAIQTQNQVLRRELERVTALLTERESRCVCLKGVPMSDEQHADHHHRNTNGMYSGSDMLNGLGQINGMQLKLPKLQ.

Positions 283-303 are enriched in polar residues; it reads TVSSYHSPLGASSQPPSTQKS. Disordered stretches follow at residues 283-318 and 337-400; these read TVSS…EKQI and NMSS…ILER. Basic and acidic residues predominate over residues 308 to 318; that stretch reads SWDHINGEKQI. Low complexity predominate over residues 337-364; sequence NMSSSGSDQDQSADMSNAGSTASTSTGN. Over residues 390–400 the composition is skewed to basic and acidic residues; it reads PDERRNTILER. A bZIP domain is found at 391–464; that stretch reads DERRNTILER…TERESRCVCL (74 aa). A basic motif region spans residues 393 to 413; the sequence is RRNTILERNKAAAVRYRKRKK. The tract at residues 419–450 is leucine-zipper; it reads MMGRVQAMEAEKNQLLAIQTQNQVLRRELERV.

Belongs to the bZIP family. Interacts with serine/threonine kinase pmk-1; perhaps in a manner dependent on dual specificity protein kinase sek-1. As to expression, expressed in intestinal cells.

The protein localises to the nucleus. The protein resides in the chromosome. In terms of biological role, transcription factor which regulates the transcription of various genes, including those involved in innate immunity and oxidative stress responses. Binds to promoter regions of genes, probably at 5'-[GACGTCA]-3' consensus sequences. Together with transcription factor daf-19, involved in regulation of the serotonergic response of ADF neurons to pathogenic food. Modulates response to infection by the Gram-negative bacterium P.aeruginosa, acting downstream of the p38 signal transduction pathway effector serine/threonine kinase pmk-1. May act with transcription factor elt-2 to control p38 gene induction in response to bacterial infection. May be phosphorylated by pmk-1. Regulates transcription of the metallothionein gene, mtl-1, perhaps acting downstream of pmk-1. In Caenorhabditis elegans, this protein is Transcription factor atf-7.